The sequence spans 538 residues: Chaperonin GroEL (538 aa).

Residues 29-32 (TLGP), 86-90 (DGTTT), glycine 413, 476-478 (NAA), and aspartate 492 contribute to the ATP site.

This sequence belongs to the chaperonin (HSP60) family. In terms of assembly, forms a cylinder of 14 subunits composed of two heptameric rings stacked back-to-back. Interacts with the co-chaperonin GroES.

The protein resides in the cytoplasm. The catalysed reaction is ATP + H2O + a folded polypeptide = ADP + phosphate + an unfolded polypeptide.. In terms of biological role, together with its co-chaperonin GroES, plays an essential role in assisting protein folding. The GroEL-GroES system forms a nano-cage that allows encapsulation of the non-native substrate proteins and provides a physical environment optimized to promote and accelerate protein folding. The polypeptide is Chaperonin GroEL (Bacillus sp. (strain PS3)).